The sequence spans 78 residues: Translational regulator CsrA (78 aa).

The protein belongs to the CsrA/RsmA family. As to quaternary structure, homodimer; the beta-strands of each monomer intercalate to form a hydrophobic core, while the alpha-helices form wings that extend away from the core.

The protein localises to the cytoplasm. Functionally, a translational regulator that binds mRNA to regulate translation initiation and/or mRNA stability. Usually binds in the 5'-UTR at or near the Shine-Dalgarno sequence preventing ribosome-binding, thus repressing translation. Its main target seems to be the major flagellin gene, while its function is anatagonized by FliW. The polypeptide is Translational regulator CsrA (Desulfovibrio desulfuricans (strain ATCC 27774 / DSM 6949 / MB)).